Here is an 83-residue protein sequence, read N- to C-terminus: Small ribosomal subunit protein bS20 (83 aa).

The protein belongs to the bacterial ribosomal protein bS20 family.

In terms of biological role, binds directly to 16S ribosomal RNA. This chain is Small ribosomal subunit protein bS20, found in Flavobacterium psychrophilum (strain ATCC 49511 / DSM 21280 / CIP 103535 / JIP02/86).